We begin with the raw amino-acid sequence, 249 residues long: Triosephosphate isomerase (249 aa).

9-11 serves as a coordination point for substrate; that stretch reads NWK. Catalysis depends on His-95, which acts as the Electrophile. Glu-165 acts as the Proton acceptor in catalysis. Substrate-binding positions include Gly-171, Ser-210, and 231 to 232; that span reads GG.

It belongs to the triosephosphate isomerase family. As to quaternary structure, homodimer.

Its subcellular location is the cytoplasm. The enzyme catalyses D-glyceraldehyde 3-phosphate = dihydroxyacetone phosphate. The protein operates within carbohydrate biosynthesis; gluconeogenesis. Its pathway is carbohydrate degradation; glycolysis; D-glyceraldehyde 3-phosphate from glycerone phosphate: step 1/1. Functionally, involved in the gluconeogenesis. Catalyzes stereospecifically the conversion of dihydroxyacetone phosphate (DHAP) to D-glyceraldehyde-3-phosphate (G3P). The sequence is that of Triosephosphate isomerase from Hyphomonas neptunium (strain ATCC 15444).